The following is a 358-amino-acid chain: Trace amine-associated receptor 7a (358 aa).

Topologically, residues 1–47 are extracellular; that stretch reads MDKLVDNFLSGQSRTMSEDLLSASSPQLCYENLNGSCIRSPYSPGPR. Asparagine 34 carries an N-linked (GlcNAc...) asparagine glycan. Disulfide bonds link cysteine 37/cysteine 201 and cysteine 120/cysteine 205. A helical membrane pass occupies residues 48–68; sequence LILYAVFGFGAVLAVCGNLLV. Residues 69–83 are Cytoplasmic-facing; it reads MTSILHFRQLHSPAN. The helical transmembrane segment at 84 to 104 threads the bilayer; that stretch reads FLVASLACADFLVGLTVMPFS. Residues 105–121 are Extracellular-facing; the sequence is TVRSVEGCWYFGDTYCK. A helical membrane pass occupies residues 122 to 143; sequence FHSCFEGSFCYSSIFHLCFISV. The Cytoplasmic portion of the chain corresponds to 144 to 166; the sequence is DRYIAVSDPLIYPTRFTASVSGK. The helical transmembrane segment at 167–187 threads the bilayer; the sequence is CITFSWLLSIIYSFSLLYTGA. Over 188-212 the chain is Extracellular; sequence NEAGLEDLVSALTCVGGCQIAVNQS. An N-linked (GlcNAc...) asparagine glycan is attached at asparagine 210. The chain crosses the membrane as a helical span at residues 213-233; that stretch reads WVFINFLLFLVPTLVMMTVYS. At 234–274 the chain is on the cytoplasmic side; sequence KIFLIAKQQAQNIEKMSKQTTRASESYKDRVAKRERKAAKT. The helical transmembrane segment at 275–295 threads the bilayer; the sequence is LGIAVAAFLLSWLPYFIDSII. Topologically, residues 296–309 are extracellular; it reads DAFLGFITPTYVYE. The helical transmembrane segment at 310–333 threads the bilayer; the sequence is ILVWIAYYNSAMNPLIYAFFYPWF. Topologically, residues 334-358 are cytoplasmic; it reads RKAIKLIVTGKILRQNSSVTNLFPE.

It belongs to the G-protein coupled receptor 1 family.

The protein resides in the cell membrane. In terms of biological role, olfactory receptor specific for N,N-dimethylalkylamines trace amines. Trace amine compounds are enriched in animal body fluids and act on trace amine-associated receptors (TAARs) to elicit both intraspecific and interspecific innate behaviors. Ligand-binding causes a conformation change that triggers signaling via G(s)-class of G alpha proteins (GNAL or GNAS). This Rattus norvegicus (Rat) protein is Trace amine-associated receptor 7a.